A 435-amino-acid polypeptide reads, in one-letter code: tRNA modification GTPase MnmE (435 aa).

The (6S)-5-formyl-5,6,7,8-tetrahydrofolate site is built by Arg-20, Glu-77, and Lys-117. The region spanning Gly-214 to Leu-359 is the TrmE-type G domain. Residues Asn-224–Ser-229, Thr-243–Thr-249, and Asp-268–Gly-271 each bind GTP. Mg(2+) contacts are provided by Ser-228 and Thr-249. Lys-435 is a (6S)-5-formyl-5,6,7,8-tetrahydrofolate binding site.

The protein belongs to the TRAFAC class TrmE-Era-EngA-EngB-Septin-like GTPase superfamily. TrmE GTPase family. Homodimer. Heterotetramer of two MnmE and two MnmG subunits. The cofactor is K(+).

It localises to the cytoplasm. Functionally, exhibits a very high intrinsic GTPase hydrolysis rate. Involved in the addition of a carboxymethylaminomethyl (cmnm) group at the wobble position (U34) of certain tRNAs, forming tRNA-cmnm(5)s(2)U34. The polypeptide is tRNA modification GTPase MnmE (Bartonella bacilliformis (strain ATCC 35685 / KC583 / Herrer 020/F12,63)).